A 338-amino-acid chain; its full sequence is Glycerol-3-phosphate dehydrogenase [NAD(P)+] (338 aa).

3 residues coordinate NADPH: serine 13, tryptophan 14, and lysine 108. Positions 108, 139, and 141 each coordinate sn-glycerol 3-phosphate. An NADPH-binding site is contributed by alanine 143. Sn-glycerol 3-phosphate contacts are provided by lysine 194, aspartate 247, serine 257, arginine 258, and asparagine 259. The active-site Proton acceptor is the lysine 194. Arginine 258 contacts NADPH. NADPH-binding residues include valine 282 and glutamate 284.

The protein belongs to the NAD-dependent glycerol-3-phosphate dehydrogenase family.

The protein resides in the cytoplasm. The catalysed reaction is sn-glycerol 3-phosphate + NAD(+) = dihydroxyacetone phosphate + NADH + H(+). It carries out the reaction sn-glycerol 3-phosphate + NADP(+) = dihydroxyacetone phosphate + NADPH + H(+). It functions in the pathway membrane lipid metabolism; glycerophospholipid metabolism. Catalyzes the reduction of the glycolytic intermediate dihydroxyacetone phosphate (DHAP) to sn-glycerol 3-phosphate (G3P), the key precursor for phospholipid synthesis. The chain is Glycerol-3-phosphate dehydrogenase [NAD(P)+] from Streptococcus pneumoniae (strain Taiwan19F-14).